Consider the following 475-residue polypeptide: Ankyrin repeat, SAM and basic leucine zipper domain-containing protein 1 (475 aa).

A disordered region spans residues 1 to 25 (MAAGALRGLPVAGGGESSESEDDGW). 3 positions are modified to phosphoserine: Ser-17, Ser-18, and Ser-20. ANK repeat units lie at residues 45 to 74 (EKKE…SVDS), 78 to 107 (YGWT…NASF), 110 to 144 (DKQS…DPNV), 148 to 177 (RLMT…EVNT), 181 to 210 (NGYT…NKML), and 214 to 243 (DGKM…PLEG). Positions 272-334 (SYTAFGDLEV…KILAALKELQ (63 aa)) constitute an SAM domain.

Interacts with DDX4, PIWIL1, RANBP9 and TDRD1.

It localises to the cytoplasm. Plays a central role during spermatogenesis by repressing transposable elements and preventing their mobilization, which is essential for the germline integrity. Acts via the piRNA metabolic process, which mediates the repression of transposable elements during meiosis by forming complexes composed of piRNAs and Piwi proteins and governs the methylation and subsequent repression of transposons. Its association with pi-bodies suggests a participation in the primary piRNAs metabolic process. Required prior to the pachytene stage to facilitate the production of multiple types of piRNAs, including those associated with repeats involved in the regulation of retrotransposons. May act by mediating protein-protein interactions during germ cell maturation. The polypeptide is Ankyrin repeat, SAM and basic leucine zipper domain-containing protein 1 (ASZ1) (Nomascus leucogenys (Northern white-cheeked gibbon)).